Reading from the N-terminus, the 133-residue chain is Small ribosomal subunit protein uS8 (133 aa).

This sequence belongs to the universal ribosomal protein uS8 family. As to quaternary structure, part of the 30S ribosomal subunit. Contacts proteins S5 and S12.

One of the primary rRNA binding proteins, it binds directly to 16S rRNA central domain where it helps coordinate assembly of the platform of the 30S subunit. This chain is Small ribosomal subunit protein uS8, found in Orientia tsutsugamushi (strain Ikeda) (Rickettsia tsutsugamushi).